The chain runs to 643 residues: Phosphomethylpyrimidine synthase (643 aa).

Substrate contacts are provided by residues Asn248, Met277, Tyr306, His342, 362–364, 403–406, and Glu442; these read SRG and DGLR. Residue His446 coordinates Zn(2+). Tyr469 serves as a coordination point for substrate. His510 provides a ligand contact to Zn(2+). Cys590, Cys593, and Cys598 together coordinate [4Fe-4S] cluster.

It belongs to the ThiC family. Homodimer. Requires [4Fe-4S] cluster as cofactor.

It catalyses the reaction 5-amino-1-(5-phospho-beta-D-ribosyl)imidazole + S-adenosyl-L-methionine = 4-amino-2-methyl-5-(phosphooxymethyl)pyrimidine + CO + 5'-deoxyadenosine + formate + L-methionine + 3 H(+). Its pathway is cofactor biosynthesis; thiamine diphosphate biosynthesis. Its function is as follows. Catalyzes the synthesis of the hydroxymethylpyrimidine phosphate (HMP-P) moiety of thiamine from aminoimidazole ribotide (AIR) in a radical S-adenosyl-L-methionine (SAM)-dependent reaction. The protein is Phosphomethylpyrimidine synthase of Paraburkholderia xenovorans (strain LB400).